The primary structure comprises 121 residues: Small ribosomal subunit protein uS13 (121 aa).

Residues 91 to 121 (HRRGLPVRGQNTKNNARTRKGPSKTVAGKKK) are disordered. Over residues 106 to 121 (ARTRKGPSKTVAGKKK) the composition is skewed to basic residues.

The protein belongs to the universal ribosomal protein uS13 family. In terms of assembly, part of the 30S ribosomal subunit. Forms a loose heterodimer with protein S19. Forms two bridges to the 50S subunit in the 70S ribosome.

In terms of biological role, located at the top of the head of the 30S subunit, it contacts several helices of the 16S rRNA. In the 70S ribosome it contacts the 23S rRNA (bridge B1a) and protein L5 of the 50S subunit (bridge B1b), connecting the 2 subunits; these bridges are implicated in subunit movement. Contacts the tRNAs in the A and P-sites. The chain is Small ribosomal subunit protein uS13 from Listeria welshimeri serovar 6b (strain ATCC 35897 / DSM 20650 / CCUG 15529 / CIP 8149 / NCTC 11857 / SLCC 5334 / V8).